The primary structure comprises 234 residues: bZIP transcription factor 1 (234 aa).

Positions 67 to 134 are disordered; that stretch reads RAQSDGSNAL…DKQRNAQQQL (68 aa). Residues 70 to 86 show a composition bias toward polar residues; that stretch reads SDGSNALLSSIGPSGTT. A compositionally biased stretch (basic and acidic residues) spans 88–128; sequence RPRDEMDCFTDTHKHKRGDGNKSRRREQCRANQARYRDKQR. Positions 106–169 constitute a bZIP domain; that stretch reads DGNKSRRREQ…RTNQSPWNTV (64 aa). The basic motif stretch occupies residues 109 to 128; that stretch reads KSRRREQCRANQARYRDKQR. The tract at residues 134-155 is leucine-zipper; that stretch reads LERSVEQLQSELSTLKHRNLDL.

It belongs to the bZIP family. Interacts with PKZ1.

It localises to the nucleus. Required for normal zoospore movement, formation of appressoria by germinated zoospore cysts and plant infection. In Phytophthora infestans (Potato late blight agent), this protein is bZIP transcription factor 1.